Here is a 492-residue protein sequence, read N- to C-terminus: Trypanothione reductase (492 aa).

Residue 35–52 (DVQTHHGPPHYAALGGTC) coordinates FAD. Residues cysteine 52 and cysteine 57 are joined by a disulfide bond. The active-site Proton acceptor is histidine 461.

Belongs to the class-I pyridine nucleotide-disulfide oxidoreductase family. In terms of assembly, homodimer. It depends on FAD as a cofactor.

The protein resides in the cytoplasm. It catalyses the reaction trypanothione + NADP(+) = trypanothione disulfide + NADPH + H(+). Its function is as follows. Trypanothione is the parasite analog of glutathione; this enzyme is the equivalent of glutathione reductase. The chain is Trypanothione reductase (TPR) from Trypanosoma brucei brucei.